The following is a 180-amino-acid chain: Bifunctional protein PyrR (180 aa).

Residues 101-113 (VILVDDVLYTGRT) carry the PRPP-binding motif.

This sequence belongs to the purine/pyrimidine phosphoribosyltransferase family. PyrR subfamily. As to quaternary structure, homodimer and homohexamer; in equilibrium.

The catalysed reaction is UMP + diphosphate = 5-phospho-alpha-D-ribose 1-diphosphate + uracil. Functionally, regulates transcriptional attenuation of the pyrimidine nucleotide (pyr) operon by binding in a uridine-dependent manner to specific sites on pyr mRNA. This disrupts an antiterminator hairpin in the RNA and favors formation of a downstream transcription terminator, leading to a reduced expression of downstream genes. Also displays a weak uracil phosphoribosyltransferase activity which is not physiologically significant. The polypeptide is Bifunctional protein PyrR (Bacillus thuringiensis subsp. konkukian (strain 97-27)).